A 346-amino-acid polypeptide reads, in one-letter code: Cobalt transport protein CbiM (346 aa).

The signal sequence occupies residues 1–25 (MKRITLYAAGSAIIGAMLLAGPAHA). 8 helical membrane passes run 31 to 51 (GILP…FLAL), 68 to 88 (PLVG…IPVP), 101 to 121 (IAAI…ALLI), 133 to 153 (TLGA…WFVF), 159 to 179 (LGAG…WATY), 196 to 216 (FYPL…PLGV), 255 to 275 (ATVV…AGPS), and 312 to 332 (LLLF…GYFW).

Belongs to the CbiM family. In terms of assembly, forms an energy-coupling factor (ECF) transporter complex composed of an ATP-binding protein (A component, CbiO), a transmembrane protein (T component, CbiQ) and 2 possible substrate-capture proteins (S components, CbiM and CbiN) of unknown stoichimetry.

The protein resides in the cell inner membrane. It participates in cofactor biosynthesis; adenosylcobalamin biosynthesis. In terms of biological role, part of the energy-coupling factor (ECF) transporter complex CbiMNOQ involved in cobalt import. This is Cobalt transport protein CbiM from Geobacter sulfurreducens (strain ATCC 51573 / DSM 12127 / PCA).